Consider the following 145-residue polypeptide: Superoxide dismutase [Cu-Zn] (145 aa).

Positions 37, 39, and 54 each coordinate Cu cation. C48 and C137 are disulfide-bonded. The Zn(2+) site is built by H54, H62, H71, and D74. Residue H111 participates in Cu cation binding.

This sequence belongs to the Cu-Zn superoxide dismutase family. Homodimer. Requires Cu cation as cofactor. The cofactor is Zn(2+).

It localises to the cytoplasm. The enzyme catalyses 2 superoxide + 2 H(+) = H2O2 + O2. Destroys radicals which are normally produced within the cells and which are toxic to biological systems. The protein is Superoxide dismutase [Cu-Zn] of Drosophila busckii (Fruit fly).